Reading from the N-terminus, the 579-residue chain is MQTATALEDSANAPSPAASSQGQFDREIVPIDTADAGNSTKRSPLKVALIMVALCCAVFLHALDNTIITTALPTITAAFDLDAAYTWIGSTYLLAVAASTMVWAKISDVFGRKPIILSANLCFFTGSLIAALSANFAMLIAARAIQGIGGAGVNVLANICVGDLFSQRKRGLYYGVIGGVWAVALSLGPVVGGSLTESISWRWCFYINLPLCAVVFVIIILLLDVKTPKTPFGKGIAAIDWVGAALSIGSTLMILLALSLGGQTEPWNSATVICLVVFGFIGWILCFSWEASLAKYPLLPVSIFKQIPTLAVLAACFIQSYAFVASAYYLPLYFQAVLGATPILSGVYLLPTAVSISISSTATGVYMRKTGQYLTPIYIGFVLQTLGYGLFIDLGPTANWAKIIVFQIIGGLGVGFNFQAPMVALQAFISPRELAMATSAYNFMRNVSGAISVVIGQTVFQNEMSKHQESLATILGPQLAAKLAGTGASASTDLIRSLPSPQRDVVHGVFANSMKSMWIMYTAFSAAALVVCPFLGKMVLREDHTETVTGLAAENAAREERLRQEKEKKDAKIRKCQVN.

Residues 1-23 (MQTATALEDSANAPSPAASSQGQ) are disordered. Over residues 10–20 (SANAPSPAASS) the composition is skewed to low complexity. Asn38 is a glycosylation site (N-linked (GlcNAc...) asparagine). Transmembrane regions (helical) follow at residues 48 to 68 (ALIM…NTII), 83 to 103 (AAYT…TMVW), 121 to 141 (LCFF…MLIA), 145 to 165 (IQGI…GDLF), 171 to 191 (GLYY…GPVV), 203 to 223 (WCFY…ILLL), 236 to 256 (IAAI…MILL), 269 to 289 (SATV…CFSW), 298 to 318 (LLPV…ACFI), 336 to 356 (AVLG…AVSI), 374 to 394 (LTPI…FIDL), 403 to 423 (IIVF…APMV), 438 to 460 (TSAY…QTVF), and 516 to 536 (SMWI…PFLG).

This sequence belongs to the major facilitator superfamily. TCR/Tet family.

It is found in the membrane. MFS-type transporter; part of the gene cluster that mediates the biosynthesis of pyrrolopyrazines, secondary metabolites showing insecticidal activity. Probably involved in the secretion of peramine and other pyrrolopyrazines. This Metarhizium majus (strain ARSEF 297) protein is MFS-type transporter ppz2.